Consider the following 424-residue polypeptide: Histidine--tRNA ligase (424 aa).

This sequence belongs to the class-II aminoacyl-tRNA synthetase family. In terms of assembly, homodimer.

It is found in the cytoplasm. It catalyses the reaction tRNA(His) + L-histidine + ATP = L-histidyl-tRNA(His) + AMP + diphosphate + H(+). The polypeptide is Histidine--tRNA ligase (Thioalkalivibrio sulfidiphilus (strain HL-EbGR7)).